The primary structure comprises 138 residues: Transcription factor Atoh7-a (138 aa).

Residues 33 to 85 (KRRLAANARERRRMQGLNTAFDSLRKVVPQWGEDKQLSKYETLQMALSYIMAL) form the bHLH domain.

It localises to the nucleus. The protein resides in the perikaryon. It is found in the cell projection. The protein localises to the axon. Functionally, transcription factor that binds to DNA at the consensus sequence 5'-CAG[GC]TG-3'. Positively regulates the determination of retinal ganglion cell fate and formation of the optic nerve and retino-hypothalamic tract. Required for retinal circadian rhythm photoentrainment. Plays a role in brainstem auditory signaling and binaural processing. Regulates the differentiation of olfactory receptor neurons. During retinal neurogenesis, activates the transcription of several genes such as brn3d, coe3, cbfa2t2, glis2, elrC and xgadd45-gamma. The protein is Transcription factor Atoh7-a of Xenopus laevis (African clawed frog).